Here is a 312-residue protein sequence, read N- to C-terminus: Ribosomal RNA small subunit methyltransferase H (312 aa).

Residues 33–35 (GGY), Asp51, Phe78, Asp97, and Gln104 contribute to the S-adenosyl-L-methionine site.

This sequence belongs to the methyltransferase superfamily. RsmH family.

It is found in the cytoplasm. It catalyses the reaction cytidine(1402) in 16S rRNA + S-adenosyl-L-methionine = N(4)-methylcytidine(1402) in 16S rRNA + S-adenosyl-L-homocysteine + H(+). Its function is as follows. Specifically methylates the N4 position of cytidine in position 1402 (C1402) of 16S rRNA. This chain is Ribosomal RNA small subunit methyltransferase H, found in Orientia tsutsugamushi (strain Boryong) (Rickettsia tsutsugamushi).